Here is a 526-residue protein sequence, read N- to C-terminus: MNGPRHDTSLFRERDVVPIRRALISVSDKTGLLDLAASLADAGVEIVSTGSTAQTIREAGHTVTDVASVTGFPESLDGRVKTLHPAIHSGLLADLRLASHEEQLKDLGIEPFELVVVNLYPFVETVASGAVDDDVVEQIDIGGPAMVRASAKNHANVAIVVSPADYAGLAAAVAAGGTTWGQRRELAARAFAHTAAYDGAVAAWFAGEAPDLSAVAERFEVRAEWGQPLRYGENAHQAAALYADPAGCGIAQASQHGGKEMSYNNYVDADAALRSAYDFAEPAVAIVKHANPCGIAVAGDIAEAHRKAHECDPVSAYGGVIAANRTVTLAMAETVRGIFTEVLIAPGYEPGALELLKTKKNLRILELPVGYARSLTEFRQISGGVLVQDTDRFDEFDSSGWTLVAGAEADAVTRADLEFTWKACRAVKSNAILLAKDGASVGVGMGQVNRVDSCTLAVSRAAERAVGAVAASDAFFPFADGPEILIAAGVAAIVQPGGSIRDEEVIASATAAGVTMYFTGERHFFH.

In terms of domain architecture, MGS-like spans 15–161 (DVVPIRRALI…KNHANVAIVV (147 aa)).

The protein belongs to the PurH family.

The enzyme catalyses (6R)-10-formyltetrahydrofolate + 5-amino-1-(5-phospho-beta-D-ribosyl)imidazole-4-carboxamide = 5-formamido-1-(5-phospho-D-ribosyl)imidazole-4-carboxamide + (6S)-5,6,7,8-tetrahydrofolate. The catalysed reaction is IMP + H2O = 5-formamido-1-(5-phospho-D-ribosyl)imidazole-4-carboxamide. The protein operates within purine metabolism; IMP biosynthesis via de novo pathway; 5-formamido-1-(5-phospho-D-ribosyl)imidazole-4-carboxamide from 5-amino-1-(5-phospho-D-ribosyl)imidazole-4-carboxamide (10-formyl THF route): step 1/1. It participates in purine metabolism; IMP biosynthesis via de novo pathway; IMP from 5-formamido-1-(5-phospho-D-ribosyl)imidazole-4-carboxamide: step 1/1. The protein is Bifunctional purine biosynthesis protein PurH of Leifsonia xyli subsp. xyli (strain CTCB07).